The chain runs to 705 residues: Structure-specific endonuclease subunit SLX1 homolog (705 aa).

A GIY-YIG domain is found at 4–90 (RFHCVYLLTS…TASARLRHAI (87 aa)). Disordered stretches follow at residues 155 to 192 (RASS…DSKG) and 290 to 323 (ASFA…RVHT). 2 stretches are compositionally biased toward polar residues: residues 160–175 (RVGT…SLQG) and 310–320 (STGSRTPSPQR). The SLX1-type zinc finger occupies 446 to 526 (CSLCTLPLQP…PSQPCPCPLC (81 aa)). The span at 595-604 (KGAGEAPGAA) shows a compositional bias: low complexity. Residues 595–628 (KGAGEAPGAASTVRASTMHVGPARRDAPRVSSPS) form a disordered region.

It belongs to the SLX1 family. As to quaternary structure, forms a heterodimer with a member of the SLX4 family. The cofactor is a divalent metal cation.

Its subcellular location is the nucleus. Catalytic subunit of a heterodimeric structure-specific endonuclease that resolves DNA secondary structures generated during DNA repair and recombination. Has endonuclease activity towards branched DNA substrates, introducing single-strand cuts in duplex DNA close to junctions with ss-DNA. The sequence is that of Structure-specific endonuclease subunit SLX1 homolog from Leishmania infantum.